The sequence spans 199 residues: MAAAGSLCQTAWRVRGWLAAGLCALLAGCASVPDAPSGTAEGAFSRGGRFAITMTESSGEQQAVQGGFTWRDDGRRYQLDLTNPLGSTEARVEGRPGHATLTKADGTVLQADTPDALVEEALGSPVPVSGLRDWLRGRVADDAPAGKLQSDAQGRPLSFEQDGWQARLSRYDDQGPGLLVLQRTEPGRRIVVRLAVSQP.

Residues 1-28 (MAAAGSLCQTAWRVRGWLAAGLCALLAG) form the signal peptide. A lipid anchor (N-palmitoyl cysteine) is attached at Cys29. Cys29 carries the S-diacylglycerol cysteine lipid modification.

Belongs to the LolB family. As to quaternary structure, monomer.

It localises to the cell outer membrane. Plays a critical role in the incorporation of lipoproteins in the outer membrane after they are released by the LolA protein. The chain is Outer-membrane lipoprotein LolB from Bordetella petrii (strain ATCC BAA-461 / DSM 12804 / CCUG 43448).